Reading from the N-terminus, the 288-residue chain is 4-hydroxybenzoate octaprenyltransferase (288 aa).

Transmembrane regions (helical) follow at residues 23–43, 46–66, 98–118, 141–161, 165–185, 213–233, 234–254, and 268–288; these read IGSL…GKGI, TKIL…GCVV, ILFV…NSMT, LPQV…FAAV, LPLV…AYDT, LIIG…GWLM, NLGG…VHQQ, and AFLN…ISYL.

This sequence belongs to the UbiA prenyltransferase family. The cofactor is Mg(2+).

It localises to the cell inner membrane. It catalyses the reaction all-trans-octaprenyl diphosphate + 4-hydroxybenzoate = 4-hydroxy-3-(all-trans-octaprenyl)benzoate + diphosphate. It participates in cofactor biosynthesis; ubiquinone biosynthesis. In terms of biological role, catalyzes the prenylation of para-hydroxybenzoate (PHB) with an all-trans polyprenyl group. Mediates the second step in the final reaction sequence of ubiquinone-8 (UQ-8) biosynthesis, which is the condensation of the polyisoprenoid side chain with PHB, generating the first membrane-bound Q intermediate 3-octaprenyl-4-hydroxybenzoate. The polypeptide is 4-hydroxybenzoate octaprenyltransferase (Yersinia enterocolitica serotype O:8 / biotype 1B (strain NCTC 13174 / 8081)).